Consider the following 229-residue polypeptide: Phosphoglycolate phosphatase (229 aa).

Catalysis depends on Asp13, which acts as the Nucleophile. Asp13, Asp15, and Asp178 together coordinate Mg(2+).

It belongs to the HAD-like hydrolase superfamily. CbbY/CbbZ/Gph/YieH family. It depends on Mg(2+) as a cofactor.

The enzyme catalyses 2-phosphoglycolate + H2O = glycolate + phosphate. It functions in the pathway organic acid metabolism; glycolate biosynthesis; glycolate from 2-phosphoglycolate: step 1/1. Specifically catalyzes the dephosphorylation of 2-phosphoglycolate. Is involved in the dissimilation of the intracellular 2-phosphoglycolate formed during the DNA repair of 3'-phosphoglycolate ends, a major class of DNA lesions induced by oxidative stress. The chain is Phosphoglycolate phosphatase from Photobacterium profundum (strain SS9).